Consider the following 205-residue polypeptide: Adenylyl-sulfate kinase (205 aa).

ATP is bound at residue 39–46; the sequence is GLSGAGKS. Catalysis depends on serine 113, which acts as the Phosphoserine intermediate.

Belongs to the APS kinase family.

The enzyme catalyses adenosine 5'-phosphosulfate + ATP = 3'-phosphoadenylyl sulfate + ADP + H(+). The protein operates within sulfur metabolism; hydrogen sulfide biosynthesis; sulfite from sulfate: step 2/3. Functionally, catalyzes the synthesis of activated sulfate. In Vibrio parahaemolyticus serotype O3:K6 (strain RIMD 2210633), this protein is Adenylyl-sulfate kinase.